Consider the following 80-residue polypeptide: Raniseptin-1 (80 aa).

Positions 1–22 (MAFLKKSLFLVLFLGIVSLSIC) are cleaved as a signal peptide. Positions 23 to 49 (EEEKREGEEEEKQEEENEELSEEELRE) are excised as a propeptide.

The protein belongs to the frog skin active peptide (FSAP) family. Dermaseptin subfamily. As to expression, expressed by the skin glands.

It is found in the secreted. In terms of biological role, has antibacterial activity against the Gram-negative bacteria E.coli ATCC 25922 (MIC=5 uM), P.aeruginosa ATCC 27853 (MIC=10 uM) and X.citri (MIC&lt; 2 uM), and the Gram-positive bacterium S.aureus ATCC 29313 (MIC=20 uM). Does not have hemolytic activity against human erythrocytes. This chain is Raniseptin-1, found in Boana raniceps (Chaco tree frog).